The chain runs to 178 residues: Protein AUXIN-REGULATED GENE INVOLVED IN ORGAN SIZE (178 aa).

The tract at residues 1–85 (MYLLSPRNGD…GGGGGSNIRE (85 aa)) is disordered. Over residues 10-27 (DEEDEQEEIQELISDDEP) the composition is skewed to acidic residues. The segment covering 33-47 (ASCATAASSSSSSGS) has biased composition (low complexity). Positions 100–151 (FSVESLLLLVCVTASLVILPLVLPPLPPPPSMLMLVPVAMLVLLLALAFMPT) are organ Size Related (OSR) domain. A run of 2 helical transmembrane segments spans residues 105 to 125 (LLLL…LPPL) and 131 to 151 (MLML…FMPT). Residues 153-178 (TSSSSSAGGGGGGGRNGATTGHAPYL) form a disordered region. A compositionally biased stretch (gly residues) spans 159–168 (AGGGGGGGRN). Positions 169-178 (GATTGHAPYL) are enriched in low complexity.

It belongs to the plant organ size related (OSR) protein family. Mostly expressed in young tissues such as young roots, young leaves, and seeds. Also present in stems, mature leaves, and spikelets.

The protein resides in the membrane. It localises to the nucleus. Its subcellular location is the cytoplasm. It is found in the endoplasmic reticulum. Its function is as follows. Promotes both cell expansion and proliferation-dependent organ growth. The polypeptide is Protein AUXIN-REGULATED GENE INVOLVED IN ORGAN SIZE (ARGOS) (Oryza sativa subsp. japonica (Rice)).